Here is a 448-residue protein sequence, read N- to C-terminus: MTFSDLLTKLQDNLDIVFNANALKERIQSDPAFAKTIREQLKLLYFLEQKQAKAKTKKKDFQPVFQNLEARFVSLGQTKLANTELNLKLDLTDATDLANYLPIAVCNLFNRDLNSFSKLSSVQPTAVEKTTNGANKPTVTIDLNQPRIHTTGTVSPELENFVNESLEARARQRAFMRVTSERMVGKIFEFQFKSQWIKWAQLAIFISMLLIGAAAIAYLVVVNLLFYRYVNPDSNLTKAVTGQNNTDRPALVDLNGGINLFFPVSASTLITLIFLGFGSTSFLLAFQGKPYSFATRSQTFKAMHFLKHQFGVTDFPRINDNYRYKVRIKWIFWTIFLFVALNALPGGNIITGGILNPSFLLNALRSNELKINSETFKTIFVGFSIFYLASIIPFALISIIAFVLSPKPSSDQTNEVLNRYVQEEMQQPFKTDCDPNNDNDLTPPAVFG.

Positions proline 428–aspartate 440 are enriched in polar residues. A disordered region spans residues proline 428–glycine 448.

This is an uncharacterized protein from Mycoplasma pneumoniae (strain ATCC 29342 / M129 / Subtype 1) (Mycoplasmoides pneumoniae).